Here is a 149-residue protein sequence, read N- to C-terminus: Calmodulin (149 aa).

Ala2 carries the N-acetylalanine modification. EF-hand domains lie at 8–43 (DQISEFKEAFSLFDKDGDGCITTKELGTVMRSLGQN), 44–79 (PTEAELQDMINEVDADGNGTIDFPEFLNLMARKMKD), 81–116 (DSEEELKEAFRVFDKDQNGFISAAELRHVMTNLGEK), and 117–149 (LTDEEVDEMIREADVDGDGQINYDEFVKVMMAK). Positions 21, 23, 25, 27, 32, 57, 59, 61, 63, 68, 94, 96, 98, and 105 each coordinate Ca(2+). Lys116 is modified (N6,N6,N6-trimethyllysine). 5 residues coordinate Ca(2+): Asp130, Asp132, Asp134, Gln136, and Glu141.

The protein belongs to the calmodulin family.

Functionally, calmodulin mediates the control of a large number of enzymes, ion channels and other proteins by Ca(2+). Among the enzymes to be stimulated by the calmodulin-Ca(2+) complex are a number of protein kinases and phosphatases. This is Calmodulin (CCM1) from Capsicum annuum (Capsicum pepper).